An 808-amino-acid polypeptide reads, in one-letter code: Phenylalanine--tRNA ligase beta subunit (808 aa).

Residues 40 to 155 (NQGATGVVVG…DDVEIGSDAL (116 aa)) form the tRNA-binding domain. Residues 409–484 (IEEPVVSLNL…RLYGYDNIPT (76 aa)) form the B5 domain. Mg(2+) is bound by residues D462, D468, E471, and E472. The region spanning 714-807 (PRFPAISRDI…LEASTGAVLR (94 aa)) is the FDX-ACB domain.

It belongs to the phenylalanyl-tRNA synthetase beta subunit family. Type 1 subfamily. Tetramer of two alpha and two beta subunits. Mg(2+) serves as cofactor.

It localises to the cytoplasm. The enzyme catalyses tRNA(Phe) + L-phenylalanine + ATP = L-phenylalanyl-tRNA(Phe) + AMP + diphosphate + H(+). This Halalkalibacterium halodurans (strain ATCC BAA-125 / DSM 18197 / FERM 7344 / JCM 9153 / C-125) (Bacillus halodurans) protein is Phenylalanine--tRNA ligase beta subunit (pheT).